Consider the following 123-residue polypeptide: Immunoglobulin lambda variable 5-45 (123 aa).

A signal peptide spans 1 to 19 (MAWTPLLLLFLSHCTGSLS). The interval 20–44 (QAVLTQPSSLSASPGASASLTCTLC) is framework-1. Residues 20 to 123 (QAVLTQPSSL…YCMIWHSSAS (104 aa)) enclose the Ig-like domain. A disulfide bond links Cys41 and Cys115. A complementarity-determining-1 region spans residues 45–53 (SGINVGTYR). The segment at 54-70 (IYWYQQKPGSPPQYLLR) is framework-2. The segment at 68-92 (LLRYKSDSDKQQGSGVPSRFSGSKD) is disordered. A complementarity-determining-2 region spans residues 71–77 (YKSDSDK). The segment covering 78–92 (QQGSGVPSRFSGSKD) has biased composition (polar residues). Residues 78–115 (QQGSGVPSRFSGSKDASANAGILLISGLQSEDEADYYC) form a framework-3 region. The segment at 116–123 (MIWHSSAS) is complementarity-determining-3.

As to quaternary structure, immunoglobulins are composed of two identical heavy chains and two identical light chains; disulfide-linked.

It localises to the secreted. It is found in the cell membrane. Its function is as follows. V region of the variable domain of immunoglobulin light chains that participates in the antigen recognition. Immunoglobulins, also known as antibodies, are membrane-bound or secreted glycoproteins produced by B lymphocytes. In the recognition phase of humoral immunity, the membrane-bound immunoglobulins serve as receptors which, upon binding of a specific antigen, trigger the clonal expansion and differentiation of B lymphocytes into immunoglobulins-secreting plasma cells. Secreted immunoglobulins mediate the effector phase of humoral immunity, which results in the elimination of bound antigens. The antigen binding site is formed by the variable domain of one heavy chain, together with that of its associated light chain. Thus, each immunoglobulin has two antigen binding sites with remarkable affinity for a particular antigen. The variable domains are assembled by a process called V-(D)-J rearrangement and can then be subjected to somatic hypermutations which, after exposure to antigen and selection, allow affinity maturation for a particular antigen. In Homo sapiens (Human), this protein is Immunoglobulin lambda variable 5-45.